The following is a 692-amino-acid chain: Elongation factor G (692 aa).

The 275-residue stretch at 8–282 folds into the tr-type G domain; sequence AKTRNIGIMA…AVIDYLPSPL (275 aa). GTP is bound by residues 17-24, 81-85, and 135-138; these read AHVDAGKT, DTPGH, and NKMD.

Belongs to the TRAFAC class translation factor GTPase superfamily. Classic translation factor GTPase family. EF-G/EF-2 subfamily.

The protein localises to the cytoplasm. Catalyzes the GTP-dependent ribosomal translocation step during translation elongation. During this step, the ribosome changes from the pre-translocational (PRE) to the post-translocational (POST) state as the newly formed A-site-bound peptidyl-tRNA and P-site-bound deacylated tRNA move to the P and E sites, respectively. Catalyzes the coordinated movement of the two tRNA molecules, the mRNA and conformational changes in the ribosome. The sequence is that of Elongation factor G from Streptococcus uberis (strain ATCC BAA-854 / 0140J).